We begin with the raw amino-acid sequence, 428 residues long: MYKEPFQPTYEYALECDKHDELKDFQTEFYKKEGTIYLDGNSLGLLSKRAEKSLLTLLDSWKEYGIDGWTEGEHPWFFLSEKLGELTAPLIGALPEETIVTGSTTTNIHQVIATFYEPKGIRTKILADELTFPSDIYALQSQIRLKGLDPDEHLVRVKSRDGRTLSEDDIIQAMTDDIALILLPSVLYRSGQILDMKRLTAEAHERGIHIGFDLCHSIGSIPHHFKEWDVDFAIWCNYKYLNAGPGGVAGLYVNKKHFNRLPGLSGWFSSRKDKQFDMEHTLTAADHAGAYQIGTPHVLSTAPLIGSLEIFKEAGIERLREKSLHITRFMLNLIAHELSDFGFTIGNPLEDEKRGGHIYLEHAEAARICKALKANGVIPDFRAPNGVRLAPVALYNTYEEVWQSVMILKKIMKDEEYKQFENKREVVA.

Residues Thr-104, Thr-105, 132–135 (FPSD), Asp-213, His-216, and Tyr-238 contribute to the pyridoxal 5'-phosphate site. Lys-239 carries the post-translational modification N6-(pyridoxal phosphate)lysine. Residues Trp-267 and Thr-295 each coordinate pyridoxal 5'-phosphate.

Belongs to the kynureninase family. As to quaternary structure, homodimer. Pyridoxal 5'-phosphate serves as cofactor.

It catalyses the reaction L-kynurenine + H2O = anthranilate + L-alanine + H(+). It carries out the reaction 3-hydroxy-L-kynurenine + H2O = 3-hydroxyanthranilate + L-alanine + H(+). It functions in the pathway amino-acid degradation; L-kynurenine degradation; L-alanine and anthranilate from L-kynurenine: step 1/1. Its pathway is cofactor biosynthesis; NAD(+) biosynthesis; quinolinate from L-kynurenine: step 2/3. Catalyzes the cleavage of L-kynurenine (L-Kyn) and L-3-hydroxykynurenine (L-3OHKyn) into anthranilic acid (AA) and 3-hydroxyanthranilic acid (3-OHAA), respectively. In Bacillus anthracis, this protein is Kynureninase.